We begin with the raw amino-acid sequence, 209 residues long: Protein N-terminal glutamine amidohydrolase (209 aa).

Active-site residues include Cys-30, His-83, and Asp-99.

It belongs to the NTAQ1 family. As to quaternary structure, monomer. Widely expressed.

It is found in the cytoplasm. Its subcellular location is the cytosol. It localises to the nucleus. It carries out the reaction N-terminal L-glutaminyl-[protein] + H2O = N-terminal L-glutamyl-[protein] + NH4(+). Functionally, mediates the side-chain deamidation of N-terminal glutamine residues to glutamate, an important step in N-end rule pathway of protein degradation. Conversion of the resulting N-terminal glutamine to glutamate renders the protein susceptible to arginylation, polyubiquitination and degradation as specified by the N-end rule. Does not act on substrates with internal or C-terminal glutamine and does not act on non-glutamine residues in any position. Does not deaminate acetylated N-terminal glutamine. With the exception of proline, all tested second-position residues on substrate peptides do not greatly influence the activity. In contrast, a proline at position 2, virtually abolishes deamidation of N-terminal glutamine. This Mus musculus (Mouse) protein is Protein N-terminal glutamine amidohydrolase (Ntaq1).